The sequence spans 227 residues: Cytochrome c oxidase subunit 2 (227 aa).

Topologically, residues 1-14 (MAYPHQLGFQDATS) are mitochondrial intermembrane. A helical transmembrane segment spans residues 15 to 45 (PIMEELLSFHDHTLMIVFLISSLVLYLISLM). At 46 to 59 (LTTKLTHTSTMDAQ) the chain is on the mitochondrial matrix side. A helical transmembrane segment spans residues 60–87 (EVETVWTILPAIILIMIALPSLRILYMM). Topologically, residues 88 to 227 (DEINNPLLTV…SFENWTTSMT (140 aa)) are mitochondrial intermembrane. Residues His161, Cys196, Glu198, Cys200, His204, and Met207 each contribute to the Cu cation site. Glu198 provides a ligand contact to Mg(2+).

The protein belongs to the cytochrome c oxidase subunit 2 family. In terms of assembly, component of the cytochrome c oxidase (complex IV, CIV), a multisubunit enzyme composed of 14 subunits. The complex is composed of a catalytic core of 3 subunits MT-CO1, MT-CO2 and MT-CO3, encoded in the mitochondrial DNA, and 11 supernumerary subunits COX4I, COX5A, COX5B, COX6A, COX6B, COX6C, COX7A, COX7B, COX7C, COX8 and NDUFA4, which are encoded in the nuclear genome. The complex exists as a monomer or a dimer and forms supercomplexes (SCs) in the inner mitochondrial membrane with NADH-ubiquinone oxidoreductase (complex I, CI) and ubiquinol-cytochrome c oxidoreductase (cytochrome b-c1 complex, complex III, CIII), resulting in different assemblies (supercomplex SCI(1)III(2)IV(1) and megacomplex MCI(2)III(2)IV(2)). Found in a complex with TMEM177, COA6, COX18, COX20, SCO1 and SCO2. Interacts with TMEM177 in a COX20-dependent manner. Interacts with COX20. Interacts with COX16. The cofactor is Cu cation.

The protein resides in the mitochondrion inner membrane. The enzyme catalyses 4 Fe(II)-[cytochrome c] + O2 + 8 H(+)(in) = 4 Fe(III)-[cytochrome c] + 2 H2O + 4 H(+)(out). Its function is as follows. Component of the cytochrome c oxidase, the last enzyme in the mitochondrial electron transport chain which drives oxidative phosphorylation. The respiratory chain contains 3 multisubunit complexes succinate dehydrogenase (complex II, CII), ubiquinol-cytochrome c oxidoreductase (cytochrome b-c1 complex, complex III, CIII) and cytochrome c oxidase (complex IV, CIV), that cooperate to transfer electrons derived from NADH and succinate to molecular oxygen, creating an electrochemical gradient over the inner membrane that drives transmembrane transport and the ATP synthase. Cytochrome c oxidase is the component of the respiratory chain that catalyzes the reduction of oxygen to water. Electrons originating from reduced cytochrome c in the intermembrane space (IMS) are transferred via the dinuclear copper A center (CU(A)) of subunit 2 and heme A of subunit 1 to the active site in subunit 1, a binuclear center (BNC) formed by heme A3 and copper B (CU(B)). The BNC reduces molecular oxygen to 2 water molecules using 4 electrons from cytochrome c in the IMS and 4 protons from the mitochondrial matrix. The chain is Cytochrome c oxidase subunit 2 (MT-CO2) from Georychus capensis (Cape mole rat).